A 207-amino-acid chain; its full sequence is A-type ATP synthase subunit E (207 aa).

It belongs to the V-ATPase E subunit family. In terms of assembly, has multiple subunits with at least A(3), B(3), C, D, E, F, H, I and proteolipid K(x).

The protein resides in the cell membrane. In terms of biological role, component of the A-type ATP synthase that produces ATP from ADP in the presence of a proton gradient across the membrane. This chain is A-type ATP synthase subunit E, found in Methanosphaera stadtmanae (strain ATCC 43021 / DSM 3091 / JCM 11832 / MCB-3).